The sequence spans 91 residues: Conotoxin Im9.1 (91 aa).

Positions 1 to 23 (MSKVGVVPLIFLVLLSIAALQNG) are cleaved as a signal peptide. The propeptide occupies 24–55 (DDPRRQRDEKQSPQGDILRSTLTKYSYNIQRR). Cystine bridges form between C56–C72, C63–C83, and C66–C86.

Belongs to the conotoxin M superfamily. Expressed by the venom duct.

Its subcellular location is the secreted. In terms of biological role, probable neurotoxin. This is Conotoxin Im9.1 from Conus imperialis (Imperial cone).